Here is a 249-residue protein sequence, read N- to C-terminus: Anamorsin homolog (249 aa).

The interval 1 to 130 (MEQFKDLQKS…ETGSAARLSF (130 aa)) is N-terminal SAM-like domain. The segment at 131–161 (AKKAAGVNVWKISGDDEELIDEEDLLDEADK) is linker. [2Fe-2S] cluster is bound by residues Cys-172, Cys-181, Cys-184, and Cys-186. The fe-S binding site A stretch occupies residues 172–186 (CSTTGKRKACKNCSC). Cys-210, Cys-213, Cys-221, and Cys-224 together coordinate [4Fe-4S] cluster. 2 short sequence motifs (cx2C motif) span residues 210-213 (CGNC) and 221-224 (CSTC). Residues 210-224 (CGNCYLGDAFRCSTC) are fe-S binding site B.

The protein belongs to the anamorsin family. In terms of assembly, monomer. It depends on [2Fe-2S] cluster as a cofactor. [4Fe-4S] cluster is required as a cofactor.

The protein localises to the cytoplasm. It localises to the mitochondrion intermembrane space. In terms of biological role, component of the cytosolic iron-sulfur (Fe-S) protein assembly (CIA) machinery. Required for the maturation of extramitochondrial Fe-S proteins. Part of an electron transfer chain functioning in an early step of cytosolic Fe-S biogenesis, facilitating the de novo assembly of a [4Fe-4S] cluster on the cytosolic Fe-S scaffold complex. Electrons are transferred from NADPH via a FAD- and FMN-containing diflavin oxidoreductase. Together with the diflavin oxidoreductase, also required for the assembly of the diferric tyrosyl radical cofactor of ribonucleotide reductase (RNR), probably by providing electrons for reduction during radical cofactor maturation in the catalytic small subunit. In Drosophila grimshawi (Hawaiian fruit fly), this protein is Anamorsin homolog.